Consider the following 611-residue polypeptide: Pseudomonine synthase PmsE (611 aa).

The Carrier domain maps to 533–608 (VSVENTRTWL…SWWALVEARQ (76 aa)). O-(pantetheine 4'-phosphoryl)serine is present on S569.

The protein belongs to the ATP-dependent AMP-binding enzyme family. It depends on pantetheine 4'-phosphate as a cofactor.

The catalysed reaction is salicylate + holo-[ACP] + ATP = salicyl-[ACP] + AMP + diphosphate. Its pathway is siderophore biosynthesis; pseudomonine biosynthesis. Its function is as follows. Involved in the biosynthesis of the siderophore pseudomonine. Specifically adenylates salicylate and loads it onto its peptidyl carrier domain, via a thioester linkage to the phosphopanthetheine moiety. The polypeptide is Pseudomonine synthase PmsE (Pseudomonas entomophila (strain L48)).